The sequence spans 831 residues: DNA ligase (831 aa).

Residues D34–D38, S83–L84, and E114 contribute to the NAD(+) site. The active-site N6-AMP-lysine intermediate is K116. Positions 137, 174, 291, and 315 each coordinate NAD(+). Residues C409, C412, C427, and C433 each coordinate Zn(2+). Residues A749–Q831 form the BRCT domain.

This sequence belongs to the NAD-dependent DNA ligase family. LigA subfamily. The cofactor is Mg(2+). It depends on Mn(2+) as a cofactor.

The enzyme catalyses NAD(+) + (deoxyribonucleotide)n-3'-hydroxyl + 5'-phospho-(deoxyribonucleotide)m = (deoxyribonucleotide)n+m + AMP + beta-nicotinamide D-nucleotide.. DNA ligase that catalyzes the formation of phosphodiester linkages between 5'-phosphoryl and 3'-hydroxyl groups in double-stranded DNA using NAD as a coenzyme and as the energy source for the reaction. It is essential for DNA replication and repair of damaged DNA. The polypeptide is DNA ligase (Xylella fastidiosa (strain M23)).